Here is a 223-residue protein sequence, read N- to C-terminus: Peroxynitrite isomerase 1 (223 aa).

The GXWXGXG signature appears at 69 to 75 (GVWRGEG). Residues lysine 186 and histidine 213 each coordinate heme b.

It belongs to the nitrobindin family. Homodimer. The cofactor is heme b.

It catalyses the reaction peroxynitrite = nitrate. It participates in nitrogen metabolism. In terms of biological role, heme-binding protein able to scavenge peroxynitrite and to protect free L-tyrosine against peroxynitrite-mediated nitration, by acting as a peroxynitrite isomerase that converts peroxynitrite to nitrate. Therefore, this protein likely plays a role in peroxynitrite sensing and in the detoxification of reactive nitrogen and oxygen species (RNS and ROS, respectively). Is able to bind nitric oxide (NO) in vitro, but may act as a sensor of peroxynitrite levels in vivo. The polypeptide is Peroxynitrite isomerase 1 (Mycobacterium marinum (strain ATCC BAA-535 / M)).